The sequence spans 460 residues: Endoglucanase C (460 aa).

A signal peptide spans 1–32 (MIKGSSLKRFKSLVMAAIFSVSIISTAIASSA). Residue Glu99 is the Proton donor of the active site. The Nucleophile role is filled by Asp155. The 61-residue stretch at 400-460 (KPDLKGDVNN…FAQLKVKLLN (61 aa)) folds into the Dockerin domain.

It belongs to the glycosyl hydrolase 8 (cellulase D) family. As to quaternary structure, monomer. Post-translationally, there are two forms of the cellulase. The shorter form lacks probably the C-terminal reiterated domains.

It catalyses the reaction Endohydrolysis of (1-&gt;4)-beta-D-glucosidic linkages in cellulose, lichenin and cereal beta-D-glucans.. The protein operates within glycan metabolism; cellulose degradation. Its function is as follows. The biological conversion of cellulose to glucose generally requires three types of hydrolytic enzymes: (1) Endoglucanases which cut internal beta-1,4-glucosidic bonds; (2) Exocellobiohydrolases that cut the disaccharide cellobiose from the non-reducing end of the cellulose polymer chain; (3) Beta-1,4-glucosidases which hydrolyze the cellobiose and other short cello-oligosaccharides to glucose. The protein is Endoglucanase C (celCCC) of Ruminiclostridium cellulolyticum (strain ATCC 35319 / DSM 5812 / JCM 6584 / H10) (Clostridium cellulolyticum).